A 607-amino-acid chain; its full sequence is Zinc metalloproteinase-disintegrin-like atrase-A (607 aa).

Positions 1 to 20 are cleaved as a signal peptide; the sequence is MIQALLVIICLAVFPHQGSS. The propeptide occupies 21–196; that stretch reads IILESGNVND…KTSQLTNTPE (176 aa). The 194-residue stretch at 205–398 folds into the Peptidase M12B domain; it reads KYIEFYLVVD…ERPQCILNKP (194 aa). Ca(2+) is bound at residue E208. N-linked (GlcNAc...) asparagine glycans are attached at residues N220 and N270. D290 is a Ca(2+) binding site. A glycan (N-linked (GlcNAc...) asparagine) is linked at N301. 3 disulfide bridges follow: C314/C393, C353/C377, and C355/C360. 3 residues coordinate Zn(2+): H338, H342, and H348. Ca(2+) contacts are provided by C393, N396, N411, F413, E415, E418, and D421. A Disintegrin domain is found at 406-492; the sequence is RPVCGNNFVE…ECPTDSLQRN (87 aa). 14 disulfide bridges follow: C409–C438, C420–C433, C422–C428, C432–C455, C446–C452, C451–C477, C464–C484, C471–C503, C496–C508, C515–C565, C530–C573, C543–C553, C560–C599, and C593–C604. A glycan (N-linked (GlcNAc...) asparagine) is linked at N434. The D/ECD-tripeptide motif lies at 470 to 472; sequence DCD. 5 residues coordinate Ca(2+): D472, L473, E475, D487, and S488. The N-linked (GlcNAc...) asparagine glycan is linked to N522.

It belongs to the venom metalloproteinase (M12B) family. P-III subfamily. P-IIIa sub-subfamily. In terms of assembly, monomer. Zn(2+) is required as a cofactor. In terms of tissue distribution, expressed by the venom gland.

It is found in the secreted. Its function is as follows. Snake venom zinc metalloproteinase that inhibits platelet aggregation by cleaving platelet glycoprotein Ib alpha (GP1BA) at Glu-298/Asp-299, and abolishes binding of von Willebrand factor (VWF) to GPIBA. The sequence is that of Zinc metalloproteinase-disintegrin-like atrase-A from Naja atra (Chinese cobra).